The sequence spans 291 residues: MELIIATRKSKLAQVQTEKVMELLKEKENVDSKKLLVMTEGDRRLDVSLNKIGGKGLFVKEIELALLNKEAHGAVHSMKDVPFELPSEFELVAMPEREDIRDAFVSLNGSTLSNLRKGARIGTSSIRRAEQLKLFRDDLEIVPIRGNVQTRIKKITEENLDGIILAAAGLKRLGMEDVISDYFDPKVFLPAIGQGALGIECLKGGEFNDYFKALDSKEVRTTVEAERSFMKVLNGGCHSLIGAYSEVKDNDLYMIGTFTVNNRIVKKDILGNKEDNILLGKKLAEKILGEV.

The residue at position 237 (Cys237) is an S-(dipyrrolylmethanemethyl)cysteine.

Belongs to the HMBS family. In terms of assembly, monomer. Dipyrromethane is required as a cofactor.

The enzyme catalyses 4 porphobilinogen + H2O = hydroxymethylbilane + 4 NH4(+). The protein operates within porphyrin-containing compound metabolism; protoporphyrin-IX biosynthesis; coproporphyrinogen-III from 5-aminolevulinate: step 2/4. Functionally, tetrapolymerization of the monopyrrole PBG into the hydroxymethylbilane pre-uroporphyrinogen in several discrete steps. The sequence is that of Porphobilinogen deaminase from Clostridium perfringens (strain ATCC 13124 / DSM 756 / JCM 1290 / NCIMB 6125 / NCTC 8237 / Type A).